A 313-amino-acid polypeptide reads, in one-letter code: tRNA dimethylallyltransferase (313 aa).

17-24 (GPTASGKT) lines the ATP pocket. Position 19–24 (19–24 (TASGKT)) interacts with substrate. 4 interaction with substrate tRNA regions span residues 42-45 (DSAL), 166-170 (QRLSR), 247-252 (RCVGYR), and 280-287 (KRQITWLR).

Belongs to the IPP transferase family. In terms of assembly, monomer. Mg(2+) is required as a cofactor.

The catalysed reaction is adenosine(37) in tRNA + dimethylallyl diphosphate = N(6)-dimethylallyladenosine(37) in tRNA + diphosphate. Catalyzes the transfer of a dimethylallyl group onto the adenine at position 37 in tRNAs that read codons beginning with uridine, leading to the formation of N6-(dimethylallyl)adenosine (i(6)A). The sequence is that of tRNA dimethylallyltransferase from Proteus mirabilis (strain HI4320).